The primary structure comprises 628 residues: Forkhead box protein O (628 aa).

Disordered stretches follow at residues 39-77 (RARSNTWPCPRPENFVEPTDELDSTKASNQQLAPGDSQQ), 182-205 (KSVRRRAASMETSRYEKRRGRAKK), 217-269 (GLND…RLSP), 316-359 (QQQG…APGY), and 389-415 (NSVTTTMSPAYPNSEPSSDSLNTYSNV). Thr-44 bears the Phosphothreonine; by PKB/AKT1 mark. A compositionally biased stretch (polar residues) spans 63-77 (TKASNQQLAPGDSQQ). The residue at position 75 (Ser-75) is a Phosphoserine. The segment at residues 95-201 (WGNLSYADLI…ETSRYEKRRG (107 aa)) is a DNA-binding region (fork-head). Ser-190 carries the post-translational modification Phosphoserine; by PKB/AKT1. 2 stretches are compositionally biased toward polar residues: residues 221–230 (ATPSPSSSVS) and 256–265 (RASSNASSCG). Ser-259 is subject to Phosphoserine; by PKB/AKT1. Residues Ser-262, Ser-263, and Ser-268 each carry the phosphoserine modification. Positions 328-337 (SQPPPPPYQP) are enriched in pro residues. Over residues 338–351 (PQHQQAQQQQSPYA) the composition is skewed to low complexity. Polar residues predominate over residues 402 to 414 (SEPSSDSLNTYSN).

Interacts with melt.

It localises to the cytoplasm. The protein localises to the nucleus. Its function is as follows. Transcription factor involved in the regulation of the insulin signaling pathway. Consistently activates both the downstream target Thor\d4EBP and the feedback control target InR. Involved in negative regulation of the cell cycle, modulating cell growth and proliferation. In response to cellular stresses, such as nutrient deprivation or increased levels of reactive oxygen species, foxo is activated and inhibits growth through the action of target genes such as Thor. Foxo activated in the adult fat body can regulate lifespan in adults; an insulin peptide itself may function as one secondary messenger of insulin-regulated aging. Also regulates Lip4, homolog of human acid lipases, thereby acting as a key modulator of lipid metabolism by insulin signaling and integrates insulin responses to glucose and lipid homeostasis. This chain is Forkhead box protein O, found in Drosophila yakuba (Fruit fly).